The sequence spans 251 residues: MDSGALWQDLGWQPDTLQARSFERLYALVLAGNTRLNLTRITGREEFWEKHLFDSLRGLAAFQDQKEPSLIDIGTGAGFPGLPIAIAHPDWYVVLVDSVRKKIAFVLSTIQALGLTNAQALTGRAEDLAHRREHRESYDLAVLRAVAQANVCAEYALPFVKLGGAAVLYRGNWEVQEEVELARACRALGGEIVEVDAFELPVSRAVRHCVVIRKTGPGLRVFPRPAGLPTQHPLGAIEGAPRVESEEPEEP.

S-adenosyl-L-methionine contacts are provided by residues glycine 74, phenylalanine 79, 125–126, and arginine 144; that span reads AE. The segment at 224 to 251 is disordered; the sequence is RPAGLPTQHPLGAIEGAPRVESEEPEEP.

It belongs to the methyltransferase superfamily. RNA methyltransferase RsmG family.

The protein resides in the cytoplasm. In terms of biological role, specifically methylates the N7 position of a guanine in 16S rRNA. In Gloeobacter violaceus (strain ATCC 29082 / PCC 7421), this protein is Ribosomal RNA small subunit methyltransferase G.